Here is a 170-residue protein sequence, read N- to C-terminus: M-agglutinin (170 aa).

The N-terminal stretch at 1–24 (MNLKKIAIASSVFAGITMALTCHA) is a signal peptide.

Its function is as follows. This protein is a non-fimbrial hemagglutinin that is specific for blood group M. This Escherichia coli protein is M-agglutinin (bmaE).